The chain runs to 668 residues: Threonine--tRNA ligase (668 aa).

In terms of domain architecture, TGS spans 1-64 (MSEAIFLTFP…ADGKIEIITR (64 aa)). The interval 245–553 (DHRKLGREMD…LIENFAGHLP (309 aa)) is catalytic. Positions 347, 398, and 530 each coordinate Zn(2+).

Belongs to the class-II aminoacyl-tRNA synthetase family. Homodimer. The cofactor is Zn(2+).

It is found in the cytoplasm. It carries out the reaction tRNA(Thr) + L-threonine + ATP = L-threonyl-tRNA(Thr) + AMP + diphosphate + H(+). Its function is as follows. Catalyzes the attachment of threonine to tRNA(Thr) in a two-step reaction: L-threonine is first activated by ATP to form Thr-AMP and then transferred to the acceptor end of tRNA(Thr). Also edits incorrectly charged L-seryl-tRNA(Thr). This is Threonine--tRNA ligase from Rhizobium leguminosarum bv. trifolii (strain WSM2304).